Reading from the N-terminus, the 506-residue chain is Maturase K (506 aa).

The protein belongs to the intron maturase 2 family. MatK subfamily.

It localises to the plastid. The protein localises to the chloroplast. In terms of biological role, usually encoded in the trnK tRNA gene intron. Probably assists in splicing its own and other chloroplast group II introns. The sequence is that of Maturase K from Uncarina grandidieri (Mouse trap tree).